Here is a 533-residue protein sequence, read N- to C-terminus: Phosphatidylinositol 4-kinase gamma 8 (533 aa).

The PI3K/PI4K catalytic domain occupies 101-397; that stretch reads GAQPLLLPSG…AVSGSDDDDD (297 aa). The tract at residues 107–113 is G-loop; it reads LPSGLGG. ATP is bound by residues 108-114, Lys129, and 210-213; these read PSGLGGA and QRFV. The segment at 243–251 is catalytic loop; sequence LNLDRHAGN. The activation loop stretch occupies residues 276-302; sequence PIDHGLCLPECLDDPYFEWLNWPQASV. An ATP-binding site is contributed by Asp278.

The protein belongs to the PI3/PI4-kinase family. Type II PI4K subfamily.

It catalyses the reaction a 1,2-diacyl-sn-glycero-3-phospho-(1D-myo-inositol) + ATP = a 1,2-diacyl-sn-glycero-3-phospho-(1D-myo-inositol 4-phosphate) + ADP + H(+). The phosphorylation of phosphatidylinositol (PI) to PI4P is the first committed step in the generation of phosphatidylinositol 4,5-bisphosphate (PIP2), a precursor of the second messenger inositol 1,4,5-trisphosphate (InsP3). This is Phosphatidylinositol 4-kinase gamma 8 (PI4KG8) from Arabidopsis thaliana (Mouse-ear cress).